The primary structure comprises 482 residues: Hydroxymethylglutaryl-CoA synthase A (482 aa).

Glu85 serves as the catalytic Proton donor/acceptor. The active-site Acyl-thioester intermediate is the Cys119. 7 residues coordinate (3S)-3-hydroxy-3-methylglutaryl-CoA: Cys119, Thr161, Ser211, His249, Lys258, Asn325, and Ser358. His249 (proton donor/acceptor) is an active-site residue.

It belongs to the thiolase-like superfamily. HMG-CoA synthase family.

It catalyses the reaction acetoacetyl-CoA + acetyl-CoA + H2O = (3S)-3-hydroxy-3-methylglutaryl-CoA + CoA + H(+). The protein operates within metabolic intermediate biosynthesis; (R)-mevalonate biosynthesis; (R)-mevalonate from acetyl-CoA: step 2/3. Condenses acetyl-CoA with acetoacetyl-CoA to form HMG-CoA, which is the substrate for HMG-CoA reductase. The sequence is that of Hydroxymethylglutaryl-CoA synthase A (hgsA) from Dictyostelium discoideum (Social amoeba).